The sequence spans 688 residues: Acyl-CoA synthetase short-chain family member B, mitochondrial (688 aa).

Belongs to the ATP-dependent AMP-binding enzyme family.

The protein localises to the mitochondrion. It catalyses the reaction acetate + ATP + CoA = acetyl-CoA + AMP + diphosphate. In terms of biological role, activates acetate so that it can be used for lipid synthesis or for energy generation. The sequence is that of Acyl-CoA synthetase short-chain family member B, mitochondrial (aslB) from Dictyostelium discoideum (Social amoeba).